The chain runs to 216 residues: Probable transaldolase (216 aa).

Lysine 83 acts as the Schiff-base intermediate with substrate in catalysis.

It belongs to the transaldolase family. Type 3B subfamily.

The protein resides in the cytoplasm. The catalysed reaction is D-sedoheptulose 7-phosphate + D-glyceraldehyde 3-phosphate = D-erythrose 4-phosphate + beta-D-fructose 6-phosphate. The protein operates within carbohydrate degradation; pentose phosphate pathway; D-glyceraldehyde 3-phosphate and beta-D-fructose 6-phosphate from D-ribose 5-phosphate and D-xylulose 5-phosphate (non-oxidative stage): step 2/3. Functionally, transaldolase is important for the balance of metabolites in the pentose-phosphate pathway. The protein is Probable transaldolase of Thermoanaerobacter sp. (strain X514).